Consider the following 148-residue polypeptide: NADH-quinone oxidoreductase subunit K 2 (148 aa).

A run of 3 helical transmembrane segments spans residues 3-23 (LAYP…GVLA), 28-48 (ILVL…LVAF), and 64-84 (LFTI…VLAV). The interval 96 to 148 (LRDTAETDAAETLPDDAGTGPSGTDAAPNGDTTTATGRPGDNAGKNKKAEATR) is disordered.

It belongs to the complex I subunit 4L family. In terms of assembly, NDH-1 is composed of 14 different subunits. Subunits NuoA, H, J, K, L, M, N constitute the membrane sector of the complex.

It is found in the cell membrane. The enzyme catalyses a quinone + NADH + 5 H(+)(in) = a quinol + NAD(+) + 4 H(+)(out). In terms of biological role, NDH-1 shuttles electrons from NADH, via FMN and iron-sulfur (Fe-S) centers, to quinones in the respiratory chain. The immediate electron acceptor for the enzyme in this species is believed to be a menaquinone. Couples the redox reaction to proton translocation (for every two electrons transferred, four hydrogen ions are translocated across the cytoplasmic membrane), and thus conserves the redox energy in a proton gradient. The sequence is that of NADH-quinone oxidoreductase subunit K 2 from Streptomyces griseus subsp. griseus (strain JCM 4626 / CBS 651.72 / NBRC 13350 / KCC S-0626 / ISP 5235).